A 74-amino-acid chain; its full sequence is Conotoxin SIIID (74 aa).

The N-terminal stretch at 1-20 is a signal peptide; that stretch reads MMSKLGVLLTVCLLLFPLTA. Positions 21–53 are excised as a propeptide; the sequence is LPLDGDQPADQLEDRMQDDISSEQYPSFVRRQK. 3 disulfide bridges follow: Cys-54-Cys-71, Cys-55-Cys-73, and Cys-61-Cys-74.

It belongs to the conotoxin M superfamily. Post-translationally, three disulfide isomers have been synthesized and tested. SIIID with the disulfide pairing 1-4;2-5;3-6 is the most active. Expressed by the venom duct.

It localises to the secreted. Its function is as follows. The short synthetic peptide SIIID (range 54-74, with disulfide pairing 1-4, 2-5 and 3-6) reversibly inhibits human alpha-7/CHRNA7 acetylcholine receptor (IC(50)=880 nM). Shows a paralytic effect in fish. The protein is Conotoxin SIIID of Conus striatus (Striated cone).